The sequence spans 593 residues: Aspartate--tRNA ligase (593 aa).

Glutamate 180 contributes to the L-aspartate binding site. The tract at residues 204-207 is aspartate; it reads QIFK. Arginine 226 is an L-aspartate binding site. ATP contacts are provided by residues 226–228 and glutamine 235; that span reads RDE. Histidine 453 is a binding site for L-aspartate. Residue glutamate 487 participates in ATP binding. Position 494 (arginine 494) interacts with L-aspartate. 539–542 lines the ATP pocket; the sequence is GLDR.

Belongs to the class-II aminoacyl-tRNA synthetase family. Type 1 subfamily. As to quaternary structure, homodimer.

The protein localises to the cytoplasm. The enzyme catalyses tRNA(Asp) + L-aspartate + ATP = L-aspartyl-tRNA(Asp) + AMP + diphosphate. Functionally, catalyzes the attachment of L-aspartate to tRNA(Asp) in a two-step reaction: L-aspartate is first activated by ATP to form Asp-AMP and then transferred to the acceptor end of tRNA(Asp). In Clostridium botulinum (strain Kyoto / Type A2), this protein is Aspartate--tRNA ligase.